The chain runs to 235 residues: uncharacterized protein (235 aa).

Disordered regions lie at residues 60–96 and 192–235; these read SSNR…QKKT and LNTS…YDSF. Residues 80 to 93 are compositionally biased toward polar residues; sequence SFQNMNSSMPSSTQ. Residues 197–214 are compositionally biased toward acidic residues; it reads SEDDTESIVETDYSEEEK.

It belongs to the asfivirus DP238L family.

This is an uncharacterized protein from Ornithodoros (relapsing fever ticks).